The following is a 244-amino-acid chain: Probable transcriptional regulatory protein CBU_1566 (244 aa).

Belongs to the TACO1 family.

The protein resides in the cytoplasm. This Coxiella burnetii (strain RSA 493 / Nine Mile phase I) protein is Probable transcriptional regulatory protein CBU_1566.